The chain runs to 1114 residues: Kinesin-like protein KIN-12F (1114 aa).

The segment at 1–84 is disordered; sequence MADNRIAGSL…RSQVSASRPR (84 aa). 2 stretches are compositionally biased toward polar residues: residues 10-39 and 48-80; these read LPTS…SNPD and PNIH…QVSA. The Kinesin motor domain maps to 104–436; it reads HVKVVVRIKP…LRFGERAKAM (333 aa). 175 to 182 is a binding site for ATP; that stretch reads GQNGSGKT. 3 coiled-coil regions span residues 761–791, 872–942, and 1038–1081; these read QQEL…QTED, ARSF…LRRA, and EVLV…HKLE. The disordered stretch occupies residues 1092-1114; sequence NTLPESALQPLHQRNSAIEEEGM.

The protein belongs to the TRAFAC class myosin-kinesin ATPase superfamily. Kinesin family. KIN-12 subfamily.

In Arabidopsis thaliana (Mouse-ear cress), this protein is Kinesin-like protein KIN-12F.